The primary structure comprises 375 residues: Peroxisomal targeting signal 2 receptor (375 aa).

6 WD repeats span residues L58–D89, E102–S133, K172–D203, H218–D249, A281–R312, and Q340–N372.

Belongs to the WD repeat peroxin-7 family. In terms of assembly, interacts with PEX21.

The protein localises to the cytoplasm. It is found in the cytosol. The protein resides in the peroxisome matrix. Receptor required for the peroxisomal import of proteins containing a C-terminal PTS2-type peroxisomal targeting signal, such as 3-oxoacyl-CoA thiolase. Specifically binds to cargo proteins containing a PTS2 peroxisomal targeting signal in the cytosol. Cargo protein-binding triggers interaction with PEX21 and formation of a ternary complex composed of PEX21 and PEX7 along with PTS2-containing cargo proteins, which is tranlocated into peroxisomes by passing through the PEX13-PEX14 docking complex. The sequence is that of Peroxisomal targeting signal 2 receptor from Saccharomyces cerevisiae (strain ATCC 204508 / S288c) (Baker's yeast).